We begin with the raw amino-acid sequence, 185 residues long: F-box protein At1g61340 (185 aa).

An F-box domain is found at 78-126; the sequence is SRELEDLPLDILVRIICGVEHEDLKQLFHVSKTIREATMIAKQSHFAYS.

This chain is F-box protein At1g61340, found in Arabidopsis thaliana (Mouse-ear cress).